Consider the following 309-residue polypeptide: Ribose-phosphate pyrophosphokinase (309 aa).

Residues D37–E39 and R96–Q97 each bind ATP. 2 residues coordinate Mg(2+): H130 and D169. The active site involves K192. Residues R194, D218, and D222–T226 contribute to the D-ribose 5-phosphate site.

It belongs to the ribose-phosphate pyrophosphokinase family. Class I subfamily. Homohexamer. Mg(2+) serves as cofactor.

The protein resides in the cytoplasm. It carries out the reaction D-ribose 5-phosphate + ATP = 5-phospho-alpha-D-ribose 1-diphosphate + AMP + H(+). The protein operates within metabolic intermediate biosynthesis; 5-phospho-alpha-D-ribose 1-diphosphate biosynthesis; 5-phospho-alpha-D-ribose 1-diphosphate from D-ribose 5-phosphate (route I): step 1/1. In terms of biological role, involved in the biosynthesis of the central metabolite phospho-alpha-D-ribosyl-1-pyrophosphate (PRPP) via the transfer of pyrophosphoryl group from ATP to 1-hydroxyl of ribose-5-phosphate (Rib-5-P). In Wolinella succinogenes (strain ATCC 29543 / DSM 1740 / CCUG 13145 / JCM 31913 / LMG 7466 / NCTC 11488 / FDC 602W) (Vibrio succinogenes), this protein is Ribose-phosphate pyrophosphokinase.